Reading from the N-terminus, the 387-residue chain is Probable WRKY transcription factor 36 (387 aa).

A DNA-binding region (WRKY) is located at residues 197-264 (CEDPSINDGC…YEGNHDHPLP (68 aa)). The disordered stretch occupies residues 322-366 (RPNYPNQLPDDYPLSSSSFSLNFSSPDPPPPSSHDHTLNFSGLRT). Over residues 329 to 346 (LPDDYPLSSSSFSLNFSS) the composition is skewed to low complexity.

It localises to the nucleus. Transcription factor. Interacts specifically with the W box (5'-(T)TGAC[CT]-3'), a frequently occurring elicitor-responsive cis-acting element. The polypeptide is Probable WRKY transcription factor 36 (WRKY36) (Arabidopsis thaliana (Mouse-ear cress)).